The primary structure comprises 175 residues: Endoribonuclease YbeY (175 aa).

H129, H133, and H139 together coordinate Zn(2+).

It belongs to the endoribonuclease YbeY family. It depends on Zn(2+) as a cofactor.

It localises to the cytoplasm. Its function is as follows. Single strand-specific metallo-endoribonuclease involved in late-stage 70S ribosome quality control and in maturation of the 3' terminus of the 16S rRNA. The chain is Endoribonuclease YbeY from Lactobacillus gasseri (strain ATCC 33323 / DSM 20243 / BCRC 14619 / CIP 102991 / JCM 1131 / KCTC 3163 / NCIMB 11718 / NCTC 13722 / AM63).